The sequence spans 118 residues: Large ribosomal subunit protein bL19 (118 aa).

It belongs to the bacterial ribosomal protein bL19 family.

In terms of biological role, this protein is located at the 30S-50S ribosomal subunit interface and may play a role in the structure and function of the aminoacyl-tRNA binding site. The protein is Large ribosomal subunit protein bL19 of Alcanivorax borkumensis (strain ATCC 700651 / DSM 11573 / NCIMB 13689 / SK2).